The chain runs to 364 residues: Putative agmatine deiminase (364 aa).

Catalysis depends on cysteine 355, which acts as the Amidino-cysteine intermediate.

The protein belongs to the agmatine deiminase family.

It catalyses the reaction agmatine + H2O = N-carbamoylputrescine + NH4(+). The protein is Putative agmatine deiminase of Mycoplasma mycoides subsp. mycoides SC (strain CCUG 32753 / NCTC 10114 / PG1).